We begin with the raw amino-acid sequence, 51 residues long: MPSHKSFMIKKKLGKKMRQNRPIPNWIRLRTDNKIRYNAKRRHWRRTKLGF.

Positions 1–21 (MPSHKSFMIKKKLGKKMRQNR) are disordered. Positions 7–19 (FMIKKKLGKKMRQ) are enriched in basic residues.

The protein belongs to the eukaryotic ribosomal protein eL39 family.

In Arabidopsis thaliana (Mouse-ear cress), this protein is Large ribosomal subunit protein eL39y (RPL39B).